The sequence spans 46 residues: Photosystem II reaction center protein Psb30 (46 aa).

Met1 bears the N-formylmethionine mark. Topologically, residues Met1–Ala20 are lumenal. The chain crosses the membrane as a helical span at residues Gln21–Leu38. Topologically, residues Leu39 to Leu46 are cytoplasmic.

The protein belongs to the Psb30/Ycf12 family. In terms of assembly, PSII is composed of 1 copy each of membrane proteins PsbA, PsbB, PsbC, PsbD, PsbE, PsbF, PsbH, PsbI, PsbJ, PsbK, PsbL, PsbM, PsbT, PsbX, PsbY, PsbZ, Psb30/Ycf12, peripheral proteins PsbO, CyanoQ (PsbQ), PsbU, PsbV and a large number of cofactors. It forms dimeric complexes. Part of a photosystem II (PSII) assembly intermediate complex PSII-I; crystallized from a strain deleted of psbJ, it forms monomeric PSII before addition of the oxygen evolving complex. PSII-I includes 3 assembly factors not found in mature PSII (Psb27, Psb28 and Psb34). Requires PSII binds multiple chlorophylls, carotenoids and specific lipids. as cofactor.

The protein resides in the cellular thylakoid membrane. Functionally, a core subunit of photosystem II (PSII). PSII is a light-driven water plastoquinone oxidoreductase, using light energy to abstract electrons from H(2)O, generating a proton gradient subsequently used for ATP formation. Helps stabilize PSII. The chain is Photosystem II reaction center protein Psb30 from Thermosynechococcus vestitus (strain NIES-2133 / IAM M-273 / BP-1).